A 254-amino-acid polypeptide reads, in one-letter code: UPF0173 protein YddR (254 aa).

This sequence belongs to the UPF0173 family.

This Bacillus subtilis (strain 168) protein is UPF0173 protein YddR (yddR).